We begin with the raw amino-acid sequence, 560 residues long: Protein SINE1 (560 aa).

An N-acetylglycine modification is found at Gly2. An ARMADILLO-type fold region spans residues 7 to 287; sequence PILRQELANL…VRGAAYEAMM (281 aa). The 44-residue stretch at 517–560 folds into the KASH domain; sequence KKKKKKMSYAKLVIAISFVVVALFATVILMVNQDDDVGYYTVPT. The chain crosses the membrane as a helical span at residues 528-548; it reads LVIAISFVVVALFATVILMVN. The Required for nuclear localization signature appears at 557-560; that stretch reads TVPT.

Interacts with SUN1 and SUN2. Binds to F-actin. As to expression, preferentially expressed in guards cells, but also detected in root cells.

It localises to the nucleus membrane. Plays a role in nucleus positioning in guard cells. The chain is Protein SINE1 from Arabidopsis thaliana (Mouse-ear cress).